Consider the following 155-residue polypeptide: Aspartate carbamoyltransferase regulatory chain (155 aa).

The Zn(2+) site is built by Cys-112, Cys-117, Cys-138, and Cys-141.

The protein belongs to the PyrI family. As to quaternary structure, contains catalytic and regulatory chains. The cofactor is Zn(2+).

In terms of biological role, involved in allosteric regulation of aspartate carbamoyltransferase. This is Aspartate carbamoyltransferase regulatory chain from Methanocorpusculum labreanum (strain ATCC 43576 / DSM 4855 / Z).